Here is a 77-residue protein sequence, read N- to C-terminus: Cysteine-rich protein 1 (77 aa).

The region spanning 2 to 63 (PKCPKCDKEV…HPCYSAMFGP (62 aa)) is the LIM zinc-binding domain. Lys-9 and Lys-22 each carry N6-acetyllysine. Position 68 is an omega-N-methylarginine (Arg-68).

Functionally, seems to have a role in zinc absorption and may function as an intracellular zinc transport protein. The polypeptide is Cysteine-rich protein 1 (Crip1) (Mus musculus (Mouse)).